The sequence spans 119 residues: Type II secretion system protein I (119 aa).

Positions 1–5 are cleaved as a propeptide — leader sequence; it reads MNARG. Methionine 6 bears the N-methylmethionine mark. Residues 6–26 form a helical membrane-spanning segment; that stretch reads MTLLEVMVALAVFAIAGLAVM.

The protein belongs to the GSP I family. In terms of assembly, type II secretion is composed of four main components: the outer membrane complex, the inner membrane complex, the cytoplasmic secretion ATPase and the periplasm-spanning pseudopilus. Interacts with core component ExeG. In terms of processing, cleaved by prepilin peptidase. Methylated by prepilin peptidase at the amino group of the N-terminal methionine once the leader sequence is cleaved by prepilin peptidase.

It is found in the cell inner membrane. Its function is as follows. Component of the type II secretion system required for the energy-dependent secretion of extracellular factors such as proteases and toxins from the periplasm. Part of the pseudopilus tip complex that is critical for the recognition and binding of secretion substrates. In Aeromonas hydrophila, this protein is Type II secretion system protein I (exeI).